Reading from the N-terminus, the 106-residue chain is Iron-sulfur cluster assembly protein CyaY (106 aa).

The protein belongs to the frataxin family.

Its function is as follows. Involved in iron-sulfur (Fe-S) cluster assembly. May act as a regulator of Fe-S biogenesis. The sequence is that of Iron-sulfur cluster assembly protein CyaY from Salmonella heidelberg (strain SL476).